The sequence spans 523 residues: 2-hydroxyisoflavanone synthase (523 aa).

The helical transmembrane segment at 2-22 (LVELAITLLVIALFIHLRPTP) threads the bilayer. Residue cysteine 450 coordinates heme.

Belongs to the cytochrome P450 family. The cofactor is heme.

Its subcellular location is the microsome membrane. The catalysed reaction is (2S)-liquiritigenin + reduced [NADPH--hemoprotein reductase] + O2 = (2R,3S)-2,4',7-trihydroxyisoflavanone + oxidized [NADPH--hemoprotein reductase] + H2O + H(+). It catalyses the reaction (2S)-naringenin + reduced [NADPH--hemoprotein reductase] + O2 = 2-hydroxy-2,3-dihydrogenistein + oxidized [NADPH--hemoprotein reductase] + H2O + H(+). 2-hydroxyisoflavanone synthase, which catalyzes the hydroxylation associated with 1,2-aryl migration of flavanones. Converts liquiritigenin and naringenin into highly unstable precursors of the isoflavones daidzein and genistein. The sequence is that of 2-hydroxyisoflavanone synthase (CYP93C2) from Glycyrrhiza uralensis (Chinese licorice).